Reading from the N-terminus, the 427-residue chain is 3-phosphoshikimate 1-carboxyvinyltransferase (427 aa).

Residues Lys23, Ser24, and Arg28 each contribute to the 3-phosphoshikimate site. Lys23 provides a ligand contact to phosphoenolpyruvate. Phosphoenolpyruvate is bound by residues Gly97 and Arg125. 3-phosphoshikimate contacts are provided by Ser170, Ser171, Gln172, Ser198, Asp314, Asn337, and Lys341. Gln172 contributes to the phosphoenolpyruvate binding site. The Proton acceptor role is filled by Asp314. The phosphoenolpyruvate site is built by Arg345, Arg387, and Lys412.

Belongs to the EPSP synthase family. Monomer.

The protein resides in the cytoplasm. It carries out the reaction 3-phosphoshikimate + phosphoenolpyruvate = 5-O-(1-carboxyvinyl)-3-phosphoshikimate + phosphate. It participates in metabolic intermediate biosynthesis; chorismate biosynthesis; chorismate from D-erythrose 4-phosphate and phosphoenolpyruvate: step 6/7. Functionally, catalyzes the transfer of the enolpyruvyl moiety of phosphoenolpyruvate (PEP) to the 5-hydroxyl of shikimate-3-phosphate (S3P) to produce enolpyruvyl shikimate-3-phosphate and inorganic phosphate. This is 3-phosphoshikimate 1-carboxyvinyltransferase from Buchnera aphidicola subsp. Baizongia pistaciae (strain Bp).